Here is a 162-residue protein sequence, read N- to C-terminus: Probable chemoreceptor glutamine deamidase CheD (162 aa).

Belongs to the CheD family.

The enzyme catalyses L-glutaminyl-[protein] + H2O = L-glutamyl-[protein] + NH4(+). Its function is as follows. Probably deamidates glutamine residues to glutamate on methyl-accepting chemotaxis receptors (MCPs), playing an important role in chemotaxis. The sequence is that of Probable chemoreceptor glutamine deamidase CheD from Caldanaerobacter subterraneus subsp. tengcongensis (strain DSM 15242 / JCM 11007 / NBRC 100824 / MB4) (Thermoanaerobacter tengcongensis).